A 1023-amino-acid chain; its full sequence is NRPS-like oxidoreductase fscA (1023 aa).

The tract at residues 54 to 454 is adenylation; the sequence is TYGDLNGMAT…NHPFVRQCMV (401 aa). The Carrier domain occupies 554–637; the sequence is PEDDVIGRQI…SIANHVRSAQ (84 aa). Serine 596 carries the post-translational modification O-(pantetheine 4'-phosphoryl)serine. The 217-residue stretch at 685-901 folds into the Thioester reductase (TE) domain; the sequence is LTGGAGYLGQ…VYDESTTRAR (217 aa).

This sequence belongs to the NRP synthetase family. It depends on pantetheine 4'-phosphate as a cofactor.

It participates in secondary metabolite biosynthesis. In terms of biological role, NRPS-like oxidoreductasee; part of the fragmented gene cluster that mediates the biosynthesis of fusarochromene, a tryptophan-derived metabolite closely related to a group of mycotoxins including fusarochromanone. Within the pathway, fscA acts as an oxidoreductase that reduces the carboxyl group of 4-hydroxykyrunenine to primary alcohol. The first step of the pathway is the epimerization of L-tryptophan to D-tryptophan in the presence of the NRPS-like tryptophan epimerase fscC. D-tryptophan is subsequently hydroxylated by the tryptophan 6-hydroxylase fscE to yield 6-hydroxytryptophan. The pyrrole ring undergoes cleavaged by the tryptophan 2,3-dioxygenase fscD and is finally converted to 4-hydroxykyrunenine by the hydrolase fscH. The NRPS-like oxidoreductase fscA reduces the carboxyl group to primary alcohol and the DMATS-type prenyltransferase fscG performs prenylation, followed by the formation of a chromene ring catalyzed by the oxidoreductase fscI, which leads to desacetylfusarochromene. Epoxidation by fscF and rearrangement reactions of chromene double bonds convert compound desacetylfusarochromene to fusarochromanones. Although specific acetyltransferases were not found near the fsc gene cluster, several predicted enzymes containing the N-acetyltransferase superfamily domain are present in the genome of F.equiseti. These predicted enzymes may have the potential to convert desacetylfusarochromene to fusarochromene. The protein is NRPS-like oxidoreductase fscA of Fusarium equiseti (Fusarium scirpi).